The chain runs to 556 residues: CDP-diacylglycerol--glycerol-3-phosphate 3-phosphatidyltransferase, mitochondrial (556 aa).

The N-terminal 28 residues, 1-28, are a transit peptide targeting the mitochondrion; it reads MAAAAAAAAGPVFWRRLLGLLPGRPGLA. Serine 49 carries the phosphoserine modification. An ATP-binding site is contributed by 124-131; that stretch reads ASLYLGIG. PLD phosphodiesterase domains follow at residues 215 to 241 and 419 to 457; these read TIGLQHIKVYLFDNNVILSGANLSDSY and FGAKGVAGAIPAAYVHIERQFYSEVCSLGQQERVQLQEY. Residues histidine 220, lysine 222, and aspartate 227 contribute to the active site.

Belongs to the CDP-alcohol phosphatidyltransferase class-II family.

It localises to the mitochondrion. It catalyses the reaction a CDP-1,2-diacyl-sn-glycerol + sn-glycerol 3-phosphate = a 1,2-diacyl-sn-glycero-3-phospho-(1'-sn-glycero-3'-phosphate) + CMP + H(+). The protein operates within phospholipid metabolism; phosphatidylglycerol biosynthesis; phosphatidylglycerol from CDP-diacylglycerol: step 1/2. With respect to regulation, activated by calcium and magnesium and inhibited by other bivalent cations. Its function is as follows. Functions in the biosynthesis of the anionic phospholipids phosphatidylglycerol and cardiolipin. The chain is CDP-diacylglycerol--glycerol-3-phosphate 3-phosphatidyltransferase, mitochondrial (PGS1) from Bos taurus (Bovine).